A 318-amino-acid chain; its full sequence is tRNA pseudouridine synthase B (318 aa).

Asp-47 functions as the Nucleophile in the catalytic mechanism.

The protein belongs to the pseudouridine synthase TruB family. Type 1 subfamily.

The catalysed reaction is uridine(55) in tRNA = pseudouridine(55) in tRNA. Responsible for synthesis of pseudouridine from uracil-55 in the psi GC loop of transfer RNAs. The polypeptide is tRNA pseudouridine synthase B (Shewanella putrefaciens (strain CN-32 / ATCC BAA-453)).